A 285-amino-acid polypeptide reads, in one-letter code: Secreted LysM effector slp2 (285 aa).

A signal peptide spans 1–16; sequence MLPITVVTLFAALAAA. Residues 75-143 form a disordered region; the sequence is GDAAKAGDAA…KGGDAAKGGN (69 aa). Positions 85-116 are enriched in basic and acidic residues; sequence KGGDAKGGDAKGGDAKGGDAKGGKGGDAKGGK. A compositionally biased stretch (gly residues) spans 117 to 139; sequence GGDAAKGGKGGDAAKGGKGGDAA. LysM domains follow at residues 157–201 and 237–281; these read VEHK…VLKI and FTRV…TINL.

Belongs to the secreted LysM effector family.

Might have a role in sequestration of chitin oligosaccharides (breakdown products of fungal cell walls that are released during invasion and act as triggers of host immunity) to dampen host defense. The sequence is that of Secreted LysM effector slp2 from Pyricularia oryzae (strain 70-15 / ATCC MYA-4617 / FGSC 8958) (Rice blast fungus).